The chain runs to 711 residues: Ribosomal RNA large subunit methyltransferase K/L (711 aa).

Residues 42–153 (DAQRAVLWSR…KGRATISVDL (112 aa)) enclose the THUMP domain.

This sequence belongs to the methyltransferase superfamily. RlmKL family.

It is found in the cytoplasm. The enzyme catalyses guanosine(2445) in 23S rRNA + S-adenosyl-L-methionine = N(2)-methylguanosine(2445) in 23S rRNA + S-adenosyl-L-homocysteine + H(+). It carries out the reaction guanosine(2069) in 23S rRNA + S-adenosyl-L-methionine = N(2)-methylguanosine(2069) in 23S rRNA + S-adenosyl-L-homocysteine + H(+). Specifically methylates the guanine in position 2445 (m2G2445) and the guanine in position 2069 (m7G2069) of 23S rRNA. This Xanthomonas oryzae pv. oryzae (strain KACC10331 / KXO85) protein is Ribosomal RNA large subunit methyltransferase K/L.